The chain runs to 635 residues: Protein NSP-INTERACTING KINASE 2 (635 aa).

Positions 1-32 (MLQGRREAKKSYALFSSTFFFFFICFLSSSSA) are cleaved as a signal peptide. Over 33–248 (ELTDKGVNFE…DGGTKNRKIA (216 aa)) the chain is Extracellular. 2 N-linked (GlcNAc...) asparagine glycosylation sites follow: Asn92 and Asn103. 4 LRR repeats span residues 104–128 (LTNL…IGKL), 129–153 (MKLK…SYSK), 155–176 (LQYL…LANM), and 177–200 (TQLT…LAKT). Asn140, Asn162, Asn175, Asn188, Asn219, Asn231, and Asn235 each carry an N-linked (GlcNAc...) asparagine glycan. The segment at 214–242 (TEKDCNGTQPKPMSITLNSSQNKSSDGGT) is disordered. The segment covering 219–241 (NGTQPKPMSITLNSSQNKSSDGG) has biased composition (polar residues). A helical membrane pass occupies residues 249–269 (VVFGVSLTCVCLLIIGFGFLL). At 270 to 635 (WWRRRHNKQV…VQAMELSGPR (366 aa)) the chain is on the cytoplasmic side. Residue Thr309 is modified to Phosphothreonine. A Protein kinase domain is found at 312–591 (FSSKNLVGKG…EGDGLVEKWE (280 aa)). Residues 318 to 326 (VGKGGFGNV) and Lys340 each bind ATP. 2 positions are modified to phosphoserine: Ser393 and Ser396. Thr408 bears the Phosphothreonine mark. The tract at residues 422–502 (YLHEQCDPKI…DVFGFGILLL (81 aa)) is interaction with geminivirus NSP protein. The active-site Proton acceptor is the Asp435. Residues Thr468, Thr469, and Thr474 each carry the phosphothreonine modification. Position 482 is a phosphotyrosine (Tyr482). Ser484 bears the Phosphoserine mark. Residue Thr485 is modified to Phosphothreonine. At Ser489 the chain carries Phosphoserine. At Thr564 the chain carries Phosphothreonine. Polar residues predominate over residues 593–613 (SSQRAETNRSYSKPNEFSSSE). The disordered stretch occupies residues 593-621 (SSQRAETNRSYSKPNEFSSSERYSDLTDD).

The protein belongs to the protein kinase superfamily. Ser/Thr protein kinase family. As to quaternary structure, oligomer. Interacts with geminivirus nuclear shuttle protein (NSP). Autophosphorylated. As to expression, expressed in flowers and roots.

It localises to the cell membrane. The catalysed reaction is L-seryl-[protein] + ATP = O-phospho-L-seryl-[protein] + ADP + H(+). The enzyme catalyses L-threonyl-[protein] + ATP = O-phospho-L-threonyl-[protein] + ADP + H(+). Inhibited by the viral nuclear shuttle protein (NSP) that binds to the region required for oligomerization. Its function is as follows. Involved in defense response to geminivirus infection. Phosphorylates RPL10A in vitro. The chain is Protein NSP-INTERACTING KINASE 2 (NIK2) from Arabidopsis thaliana (Mouse-ear cress).